A 369-amino-acid chain; its full sequence is Methionine import ATP-binding protein MetN 1 (369 aa).

Residues 29-265 (IRLHGLGKRY…PRHAVTRSLL (237 aa)) form the ABC transporter domain. 62-69 (GRSGAGKS) lines the ATP pocket.

Belongs to the ABC transporter superfamily. Methionine importer (TC 3.A.1.24) family. The complex is composed of two ATP-binding proteins (MetN), two transmembrane proteins (MetI) and a solute-binding protein (MetQ).

Its subcellular location is the cell inner membrane. It catalyses the reaction L-methionine(out) + ATP + H2O = L-methionine(in) + ADP + phosphate + H(+). It carries out the reaction D-methionine(out) + ATP + H2O = D-methionine(in) + ADP + phosphate + H(+). Its function is as follows. Part of the ABC transporter complex MetNIQ involved in methionine import. Responsible for energy coupling to the transport system. This Pseudomonas aeruginosa (strain ATCC 15692 / DSM 22644 / CIP 104116 / JCM 14847 / LMG 12228 / 1C / PRS 101 / PAO1) protein is Methionine import ATP-binding protein MetN 1.